Consider the following 124-residue polypeptide: Biogenesis of lysosome-related organelles complex 1 subunit CNL1 (124 aa).

Residues 1 to 20 (MMSENITAVEPQENNDVEAD) are disordered. A coiled-coil region spans residues 75-98 (IGMAKDLLQKCDDLEKHYDQLDAV).

This sequence belongs to the BLOC1S4 family. In terms of assembly, component of the biogenesis of lysosome-related organelles complex-1 (BLOC-1).

It is found in the cytoplasm. Component of the biogenesis of lysosome-related organelles complex-1 (BLOC-1), a complex that is involved in endosomal cargo sorting. This is Biogenesis of lysosome-related organelles complex 1 subunit CNL1 (CLN1) from Kluyveromyces lactis (strain ATCC 8585 / CBS 2359 / DSM 70799 / NBRC 1267 / NRRL Y-1140 / WM37) (Yeast).